Reading from the N-terminus, the 192-residue chain is uncharacterized protein (192 aa).

A run of 2 helical transmembrane segments spans residues 31 to 51 and 119 to 139; these read IVETIGYFIFWLGGFSPYVYE and VPGAVLMAFLLGVFSGVLWEI.

It localises to the cell membrane. This is an uncharacterized protein from Thermotoga maritima (strain ATCC 43589 / DSM 3109 / JCM 10099 / NBRC 100826 / MSB8).